A 202-amino-acid chain; its full sequence is Large ribosomal subunit protein mL40 (202 aa).

The interval 42–79 is disordered; it reads IQHQQTASYASKGKSGPPAGMFSGQKAGSKKSKGPKQV.

The protein belongs to the mitochondrion-specific ribosomal protein mL40 family. Component of the mitochondrial large ribosomal subunit (mt-LSU). Mature N.crassa 74S mitochondrial ribosomes consist of a small (37S) and a large (54S) subunit. The 37S small subunit contains a 16S ribosomal RNA (16S mt-rRNA) and 32 different proteins. The 54S large subunit contains a 23S rRNA (23S mt-rRNA) and 42 different proteins. mL40 is binding to NAD.

The protein resides in the mitochondrion. Component of the mitochondrial ribosome (mitoribosome), a dedicated translation machinery responsible for the synthesis of mitochondrial genome-encoded proteins, including at least some of the essential transmembrane subunits of the mitochondrial respiratory chain. The mitoribosomes are attached to the mitochondrial inner membrane and translation products are cotranslationally integrated into the membrane. This chain is Large ribosomal subunit protein mL40 (mrpl28), found in Neurospora crassa (strain ATCC 24698 / 74-OR23-1A / CBS 708.71 / DSM 1257 / FGSC 987).